We begin with the raw amino-acid sequence, 119 residues long: Large ribosomal subunit protein bL19 (119 aa).

It belongs to the bacterial ribosomal protein bL19 family.

In terms of biological role, this protein is located at the 30S-50S ribosomal subunit interface and may play a role in the structure and function of the aminoacyl-tRNA binding site. The polypeptide is Large ribosomal subunit protein bL19 (Borreliella afzelii (strain PKo) (Borrelia afzelii)).